A 327-amino-acid chain; its full sequence is MFNDMPVFDYEDIQLIPNKCIINSRSEADTSVRLGNYTFKLPVIPANMQTIIDETIAEQLARDGYFYIMHRFDEEGRKPFIQRMHEQQLIASISVGVKDYEYDFVSSLKEDAPEFITIDIAHGHADSVIKMIKHIKAELPETFVIAGNVGTPEAVRELENAGADATKVGIGPGKVCITKVKTGFGTGGWQLAAVRWCAKAARKPIIADGGIRTHGDIAKSIRFGATMVMIGSLFAGHIESPGKMVEIDGQSFKEYYGSASEYQKGEHKNVEGKKILLPTKGHLADTLTEMKQDLQSSISYAGGRDLESLRRVNYVIVKNSIWNGDSI.

The Thioimidate intermediate role is filled by cysteine 176. 205–228 (IIADGGIRTHGDIAKSIRFGATMV) lines the NADP(+) pocket.

The protein belongs to the IMPDH/GMPR family. GuaC type 2 subfamily.

It carries out the reaction IMP + NH4(+) + NADP(+) = GMP + NADPH + 2 H(+). Catalyzes the irreversible NADPH-dependent deamination of GMP to IMP. It functions in the conversion of nucleobase, nucleoside and nucleotide derivatives of G to A nucleotides, and in maintaining the intracellular balance of A and G nucleotides. This is GMP reductase from Streptococcus equi subsp. equi (strain 4047).